The chain runs to 416 residues: Enterobactin exporter EntS (416 aa).

The Cytoplasmic portion of the chain corresponds to 1–21 (MNKQSWLLNLSLLKTHPAFRA). The helical transmembrane segment at 22–42 (VFLARFISIVSLGLLGVAVPV) threads the bilayer. Residues 43-55 (QIQMMTHSTWQVG) lie on the Periplasmic side of the membrane. The helical transmembrane segment at 56-76 (LSVTLTGGAMFVGLMVGGVLA) threads the bilayer. The Cytoplasmic segment spans residues 77 to 83 (DRYERKK). A helical transmembrane segment spans residues 84 to 104 (VILLARGTCGIGFIGLCLNAL). Residues 105 to 109 (LPEPS) lie on the Periplasmic side of the membrane. A helical transmembrane segment spans residues 110-130 (LLAIYLLGLWDGFFASLGVTA). Topologically, residues 131-156 (LLAATPALVGRENLMQAGAITMLTVR) are cytoplasmic. Residues 157–177 (LGSVISPMIGGLLLATGGVAW) form a helical membrane-spanning segment. Residue asparagine 178 is a topological domain, periplasmic. A helical membrane pass occupies residues 179–199 (YGLAAAGTFITLLPLLSLPAL). At 200-218 (PPPPQPREHPLKSLLAGFR) the chain is on the cytoplasmic side. The helical transmembrane segment at 219-239 (FLLASPLVGGIALLGGLLTMA) threads the bilayer. Residues 240–256 (SAVRVLYPALADNWQMS) lie on the Periplasmic side of the membrane. The chain crosses the membrane as a helical span at residues 257 to 277 (AAQIGFLYAAIPLGAAIGALT). The Cytoplasmic portion of the chain corresponds to 278-287 (SGKLAHSARP). The chain crosses the membrane as a helical span at residues 288 to 307 (GLLMLLSTLGSFLAIGLFGL). Topologically, residues 308-313 (MPMWIL) are periplasmic. The chain crosses the membrane as a helical span at residues 314–336 (GVVCLALFGWLSAVSSLLQYTML). The Cytoplasmic portion of the chain corresponds to 337-356 (QTQTPEAMLGRINGLWTAQN). Residues 357 to 377 (VTGDAIGAALLGGLGAMMTPV) form a helical membrane-spanning segment. Position 378 (alanine 378) is a topological domain, periplasmic. Residues 379-399 (SASASGFGLLIIGVLLLLVLV) traverse the membrane as a helical segment. Topologically, residues 400 to 416 (ELRRFRQTPPQVTASDG) are cytoplasmic.

It belongs to the major facilitator superfamily. EntS (TC 2.A.1.38) family.

The protein resides in the cell inner membrane. Functionally, component of an export pathway for enterobactin. The protein is Enterobactin exporter EntS of Escherichia coli O157:H7.